We begin with the raw amino-acid sequence, 186 residues long: TATA box-binding protein-like 1 (186 aa).

The protein belongs to the TBP family.

It is found in the cytoplasm. Its subcellular location is the nucleus. Functionally, part of a specialized transcription system that mediates the transcription of most ribosomal proteins through the 5'-TCT-3' motif which is a core promoter element at these genes. Seems to also mediate the transcription of NF1. Does not bind the TATA box. Members of the TBP family are differentially required to regulate transcription and development during early embryogenesis. Particularly regulates genes that have a role in catabolism. This Xenopus tropicalis (Western clawed frog) protein is TATA box-binding protein-like 1 (tbpl1).